The chain runs to 358 residues: uncharacterized protein (358 aa).

Position 29–36 (29–36 (GPINSGKT)) interacts with ATP.

It belongs to the archaeal ATPase family.

This is an uncharacterized protein from Methanocaldococcus jannaschii (strain ATCC 43067 / DSM 2661 / JAL-1 / JCM 10045 / NBRC 100440) (Methanococcus jannaschii).